A 395-amino-acid chain; its full sequence is Thyroid hormone receptor beta (395 aa).

The interval 1–31 (MSEPAENCSPRWKDEAIQNGYIPSYLDKDEL) is modulating. Residues C32, C35, C49, C52, C70, C76, C86, and C89 each contribute to the Zn(2+) site. 2 consecutive NR C4-type zinc fingers follow at residues 32 to 52 (CVVCGDKATGYHYRCITCEGC) and 70 to 94 (CKYEGKCVIDKVTRNQCQECRFKKC). The nuclear receptor DNA-binding region spans 32 to 99 (CVVCGDKATG…RFKKCIAVGM (68 aa)). The NR LBD domain occupies 142 to 395 (EEWDLIRMVT…PPLFLEVFED (254 aa)). 3,3',5-triiodo-L-thyronine contacts are provided by R216, N265, and H369. Residues R216, N265, and H369 each contribute to the L-thyroxine site.

It belongs to the nuclear hormone receptor family. NR1 subfamily.

Its subcellular location is the nucleus. Nuclear hormone receptor that can act as a repressor or activator of transcription. High affinity receptor for thyroid hormones, including triiodothyronine and thyroxine. This chain is Thyroid hormone receptor beta (thrb), found in Paralichthys olivaceus (Bastard halibut).